Consider the following 242-residue polypeptide: Ethanolamine ammonia-lyase small subunit (242 aa).

Positions 155 and 176 each coordinate adenosylcob(III)alamin.

This sequence belongs to the EutC family. As to quaternary structure, the basic unit is a heterodimer which dimerizes to form tetramers. The heterotetramers trimerize; 6 large subunits form a core ring with 6 small subunits projecting outwards. It depends on adenosylcob(III)alamin as a cofactor.

It localises to the bacterial microcompartment. It carries out the reaction ethanolamine = acetaldehyde + NH4(+). The protein operates within amine and polyamine degradation; ethanolamine degradation. Its function is as follows. Catalyzes the deamination of various vicinal amino-alcohols to oxo compounds. Allows this organism to utilize ethanolamine as the sole source of nitrogen and carbon in the presence of external vitamin B12. The chain is Ethanolamine ammonia-lyase small subunit from Clostridium acetobutylicum (strain ATCC 824 / DSM 792 / JCM 1419 / IAM 19013 / LMG 5710 / NBRC 13948 / NRRL B-527 / VKM B-1787 / 2291 / W).